The following is a 158-amino-acid chain: SsrA-binding protein (158 aa).

Belongs to the SmpB family.

It localises to the cytoplasm. Functionally, required for rescue of stalled ribosomes mediated by trans-translation. Binds to transfer-messenger RNA (tmRNA), required for stable association of tmRNA with ribosomes. tmRNA and SmpB together mimic tRNA shape, replacing the anticodon stem-loop with SmpB. tmRNA is encoded by the ssrA gene; the 2 termini fold to resemble tRNA(Ala) and it encodes a 'tag peptide', a short internal open reading frame. During trans-translation Ala-aminoacylated tmRNA acts like a tRNA, entering the A-site of stalled ribosomes, displacing the stalled mRNA. The ribosome then switches to translate the ORF on the tmRNA; the nascent peptide is terminated with the 'tag peptide' encoded by the tmRNA and targeted for degradation. The ribosome is freed to recommence translation, which seems to be the essential function of trans-translation. In Buchnera aphidicola subsp. Baizongia pistaciae (strain Bp), this protein is SsrA-binding protein.